A 342-amino-acid polypeptide reads, in one-letter code: tRNA N6-adenosine threonylcarbamoyltransferase (342 aa).

Positions 111 and 115 each coordinate Fe cation. Substrate-binding positions include 133-137 (AVSGG), Asp-166, Gly-179, Asp-183, and Asn-272. Fe cation is bound at residue Asp-300.

Belongs to the KAE1 / TsaD family. The cofactor is Fe(2+).

Its subcellular location is the cytoplasm. It catalyses the reaction L-threonylcarbamoyladenylate + adenosine(37) in tRNA = N(6)-L-threonylcarbamoyladenosine(37) in tRNA + AMP + H(+). Functionally, required for the formation of a threonylcarbamoyl group on adenosine at position 37 (t(6)A37) in tRNAs that read codons beginning with adenine. Is involved in the transfer of the threonylcarbamoyl moiety of threonylcarbamoyl-AMP (TC-AMP) to the N6 group of A37, together with TsaE and TsaB. TsaD likely plays a direct catalytic role in this reaction. The polypeptide is tRNA N6-adenosine threonylcarbamoyltransferase (Geobacter sp. (strain M21)).